A 402-amino-acid polypeptide reads, in one-letter code: CinA-like protein (402 aa).

Belongs to the CinA family.

This is CinA-like protein from Escherichia coli O17:K52:H18 (strain UMN026 / ExPEC).